Consider the following 391-residue polypeptide: uncharacterized protein (391 aa).

Residues 85-314 (ATAAFVGFPS…LKEKIYEKLG (230 aa)) form the OBG-type G domain. Residues 91-98 (GFPSVGKS), 137-141 (DAPGI), and 267-270 (NKID) contribute to the GTP site. Positions 314–389 (GFIKIYLKPQ…EDGDILTIVI (76 aa)) constitute a TGS domain.

Belongs to the TRAFAC class OBG-HflX-like GTPase superfamily. OBG GTPase family.

This is an uncharacterized protein from Methanocaldococcus jannaschii (strain ATCC 43067 / DSM 2661 / JAL-1 / JCM 10045 / NBRC 100440) (Methanococcus jannaschii).